The sequence spans 2195 residues: Integrator complex subunit 1 (2195 aa).

The disordered stretch occupies residues 1–86 (MNRAKPTTVR…RPKLSSTPPL (86 aa)). Residue serine 13 is modified to Phosphoserine. Polar residues predominate over residues 34–45 (GQASESKTTSTL). Lysine 47 carries the post-translational modification N6-acetyllysine. Low complexity predominate over residues 62–75 (SASLSGTSALTGLT). Position 83 is a phosphothreonine (threonine 83). Serine 87 is modified (phosphoserine). Positions 267–297 (LLQGEGARSGGELGAGSSPHPSLTEEEDSQT) are disordered. A phosphoserine mark is found at serine 307 and serine 926. The interval 923 to 947 (STASGEEDDEGESREQKAKKRQRQQ) is disordered. The helical transmembrane segment at 1165–1185 (HILVVHAMVILLTLGPPRSGD) threads the bilayer. The segment at 1313–1347 (SLPPRRDSTEAPKPESSPEPPPGQGRTRAGTQVPV) is disordered. Residues 1316-1325 (PRRDSTEAPK) are compositionally biased toward basic and acidic residues. Phosphoserine is present on residues serine 1320, serine 1328, and serine 1329.

This sequence belongs to the Integrator subunit 1 family. As to quaternary structure, component of the Integrator complex, composed of core subunits INTS1, INTS2, INTS3, INTS4, INTS5, INTS6, INTS7, INTS8, INTS9/RC74, INTS10, INTS11/CPSF3L, INTS12, INTS13, INTS14 and INTS15. The core complex associates with protein phosphatase 2A subunits PPP2CA and PPP2R1A, to form the Integrator-PP2A (INTAC) complex. Interacts with ESRRB, ESRRB is not a core component of the Integrator complex and this association is a bridge for the interaction with the multiprotein complex Integrator; attracts the transcriptional machinery.

It is found in the nucleus. The protein localises to the nucleus membrane. Functionally, component of the integrator complex, a multiprotein complex that terminates RNA polymerase II (Pol II) transcription in the promoter-proximal region of genes. The integrator complex provides a quality checkpoint during transcription elongation by driving premature transcription termination of transcripts that are unfavorably configured for transcriptional elongation: the complex terminates transcription by (1) catalyzing dephosphorylation of the C-terminal domain (CTD) of Pol II subunit POLR2A/RPB1 and SUPT5H/SPT5, (2) degrading the exiting nascent RNA transcript via endonuclease activity and (3) promoting the release of Pol II from bound DNA. The integrator complex is also involved in terminating the synthesis of non-coding Pol II transcripts, such as enhancer RNAs (eRNAs), small nuclear RNAs (snRNAs), telomerase RNAs and long non-coding RNAs (lncRNAs). Within the integrator complex, INTS1 is involved in the post-termination step: INTS1 displaces INTS3 and the SOSS factors, allowing the integrator complex to return to the closed conformation, ready to bind to the paused elongation complex for another termination cycle. Mediates recruitment of cytoplasmic dynein to the nuclear envelope, probably as component of the integrator complex. This is Integrator complex subunit 1 from Mus musculus (Mouse).